The chain runs to 204 residues: FMN-dependent NADH:quinone oxidoreductase (204 aa).

FMN-binding positions include Ser10 and 16-18 (SKS).

Belongs to the azoreductase type 1 family. As to quaternary structure, homodimer. It depends on FMN as a cofactor.

It carries out the reaction 2 a quinone + NADH + H(+) = 2 a 1,4-benzosemiquinone + NAD(+). It catalyses the reaction N,N-dimethyl-1,4-phenylenediamine + anthranilate + 2 NAD(+) = 2-(4-dimethylaminophenyl)diazenylbenzoate + 2 NADH + 2 H(+). In terms of biological role, quinone reductase that provides resistance to thiol-specific stress caused by electrophilic quinones. Functionally, also exhibits azoreductase activity. Catalyzes the reductive cleavage of the azo bond in aromatic azo compounds to the corresponding amines. This chain is FMN-dependent NADH:quinone oxidoreductase, found in Ruegeria pomeroyi (strain ATCC 700808 / DSM 15171 / DSS-3) (Silicibacter pomeroyi).